The chain runs to 201 residues: Ras-related protein Rab-1B (201 aa).

At M1 the chain carries N-acetylmethionine. GTP contacts are provided by S17, G18, V19, G20, K21, S22, C23, Y33, T34, E35, S36, S39, and T40. Residue S22 coordinates Mg(2+). Residues 30–45 (DDTYTESYISTIGVDF) carry the Switch 1 motif. Residues T40 and D63 each coordinate Mg(2+). Positions 64–83 (TAGQERFRTITSSYYRGAHG) are switch 2 region; required for interaction with REP1/CHM. Residues 65 to 80 (AGQERFRTITSSYYRG) carry the Switch 2 motif. Residues G66, N121, K122, D124, S151, A152, and K153 each contribute to the GTP site. Positions 174–201 (GPGAASGGERPNLKIDSTPVKPASGGCC) are disordered. S-geranylgeranyl cysteine attachment occurs at residues C200 and C201. C201 carries the cysteine methyl ester modification.

The protein belongs to the small GTPase superfamily. Rab family. In terms of assembly, interacts with MICAL1 and MICAL2. Interacts (GTP-bound form) with MICALCL, MICAL1 and MILCAL3. Interacts with GDI1; the interaction requires the GDP-bound state. Interacts with CHM/REP1; the interaction requires the GDP-bound form and is necessary for prenylation by GGTase II. Interacts with RabGAP TBC1D20. Interacts (in GDP-bound form) with lipid phosphatase MTMR6 (via GRAM domain); the interaction regulates MTMR6 recruitment to the endoplasmic reticulum-Golgi intermediate compartment. Interacts (in GDP-bound form) with lipid phosphatase MTMR7. Requires Mg(2+) as cofactor. Post-translationally, prenylated; by GGTase II, only after interaction of the substrate with Rab escort protein 1 (REP1).

The protein localises to the cytoplasm. Its subcellular location is the membrane. It localises to the preautophagosomal structure membrane. It is found in the perinuclear region. The enzyme catalyses GTP + H2O = GDP + phosphate + H(+). With respect to regulation, regulated by guanine nucleotide exchange factors (GEFs) which promote the exchange of bound GDP for free GTP. Regulated by GTPase activating proteins (GAPs) including TBC1D20 which increases the GTP hydrolysis activity. Inhibited by GDP dissociation inhibitors (GDIs). Its function is as follows. The small GTPases Rab are key regulators of intracellular membrane trafficking, from the formation of transport vesicles to their fusion with membranes. Rabs cycle between an inactive GDP-bound form and an active GTP-bound form that is able to recruit to membranes different set of downstream effectors directly responsible for vesicle formation, movement, tethering and fusion. Plays a role in the initial events of the autophagic vacuole development which take place at specialized regions of the endoplasmic reticulum. Regulates vesicular transport between the endoplasmic reticulum and successive Golgi compartments. Required to modulate the compacted morphology of the Golgi. Promotes the recruitment of lipid phosphatase MTMR6 to the endoplasmic reticulum-Golgi intermediate compartment. The sequence is that of Ras-related protein Rab-1B (Rab1b) from Mus musculus (Mouse).